A 155-amino-acid chain; its full sequence is Ribosome maturation factor RimP (155 aa).

It belongs to the RimP family.

The protein resides in the cytoplasm. In terms of biological role, required for maturation of 30S ribosomal subunits. The chain is Ribosome maturation factor RimP from Staphylococcus saprophyticus subsp. saprophyticus (strain ATCC 15305 / DSM 20229 / NCIMB 8711 / NCTC 7292 / S-41).